A 118-amino-acid chain; its full sequence is Small ribosomal subunit protein uS13 (118 aa).

The segment at 94-118 is disordered; sequence GLPVRGQRTKTNARTRKGPRKPIKK.

The protein belongs to the universal ribosomal protein uS13 family. Part of the 30S ribosomal subunit. Forms a loose heterodimer with protein S19. Forms two bridges to the 50S subunit in the 70S ribosome.

Functionally, located at the top of the head of the 30S subunit, it contacts several helices of the 16S rRNA. In the 70S ribosome it contacts the 23S rRNA (bridge B1a) and protein L5 of the 50S subunit (bridge B1b), connecting the 2 subunits; these bridges are implicated in subunit movement. Contacts the tRNAs in the A and P-sites. This is Small ribosomal subunit protein uS13 from Tolumonas auensis (strain DSM 9187 / NBRC 110442 / TA 4).